Reading from the N-terminus, the 345-residue chain is Phosphate acyltransferase (345 aa).

This sequence belongs to the PlsX family. As to quaternary structure, homodimer. Probably interacts with PlsY.

It is found in the cytoplasm. The catalysed reaction is a fatty acyl-[ACP] + phosphate = an acyl phosphate + holo-[ACP]. Its pathway is lipid metabolism; phospholipid metabolism. Its function is as follows. Catalyzes the reversible formation of acyl-phosphate (acyl-PO(4)) from acyl-[acyl-carrier-protein] (acyl-ACP). This enzyme utilizes acyl-ACP as fatty acyl donor, but not acyl-CoA. This chain is Phosphate acyltransferase, found in Anaplasma phagocytophilum (strain HZ).